The following is a 506-amino-acid chain: ATP synthase subunit alpha (506 aa).

171–178 (GDRQTGKT) contacts ATP.

This sequence belongs to the ATPase alpha/beta chains family. As to quaternary structure, F-type ATPases have 2 components, CF(1) - the catalytic core - and CF(0) - the membrane proton channel. CF(1) has five subunits: alpha(3), beta(3), gamma(1), delta(1), epsilon(1). CF(0) has four main subunits: a, b, b' and c.

The protein localises to the cellular thylakoid membrane. The catalysed reaction is ATP + H2O + 4 H(+)(in) = ADP + phosphate + 5 H(+)(out). Functionally, produces ATP from ADP in the presence of a proton gradient across the membrane. The alpha chain is a regulatory subunit. This is ATP synthase subunit alpha from Nostoc punctiforme (strain ATCC 29133 / PCC 73102).